The primary structure comprises 356 residues: Aromatic dipeptide epimerase (356 aa).

Residues Thr136 and 161 to 163 (KVK) contribute to the substrate site. Residues Asp191, Glu219, and Asp244 each coordinate Mg(2+). Substrate is bound by residues Lys268 and 320-322 (DLD).

The protein belongs to the mandelate racemase/muconate lactonizing enzyme family. Mg(2+) serves as cofactor.

Its function is as follows. Has epimerase activity with a variety of hydrophobic dipeptides (in vitro). Enzyme activity is highest with L-Phe-L-Tyr, but is still relatively low, suggesting that L-Phe-L-Tyr is not the physiological substrate. The polypeptide is Aromatic dipeptide epimerase (Herpetosiphon aurantiacus (strain ATCC 23779 / DSM 785 / 114-95)).